A 157-amino-acid chain; its full sequence is Transcription elongation factor GreA (157 aa).

Positions Met1–Val75 form a coiled coil.

The protein belongs to the GreA/GreB family.

In terms of biological role, necessary for efficient RNA polymerase transcription elongation past template-encoded arresting sites. The arresting sites in DNA have the property of trapping a certain fraction of elongating RNA polymerases that pass through, resulting in locked ternary complexes. Cleavage of the nascent transcript by cleavage factors such as GreA or GreB allows the resumption of elongation from the new 3'terminus. GreA releases sequences of 2 to 3 nucleotides. This is Transcription elongation factor GreA from Mycoplasma mycoides subsp. mycoides SC (strain CCUG 32753 / NCTC 10114 / PG1).